The primary structure comprises 138 residues: Ribosome-binding factor A (138 aa).

The disordered stretch occupies residues 117 to 138 (AEDGQHQEGPASADAKPESTEE).

Belongs to the RbfA family. Monomer. Binds 30S ribosomal subunits, but not 50S ribosomal subunits or 70S ribosomes.

Its subcellular location is the cytoplasm. Functionally, one of several proteins that assist in the late maturation steps of the functional core of the 30S ribosomal subunit. Associates with free 30S ribosomal subunits (but not with 30S subunits that are part of 70S ribosomes or polysomes). Required for efficient processing of 16S rRNA. May interact with the 5'-terminal helix region of 16S rRNA. In Pseudomonas syringae pv. syringae (strain B728a), this protein is Ribosome-binding factor A.